Consider the following 560-residue polypeptide: Involucrin (560 aa).

Residues methionine 1–leucine 15 show a composition bias toward polar residues. Disordered stretches follow at residues methionine 1–aspartate 131, glutamate 150–glutamine 359, and glycine 404–leucine 534. A compositionally biased stretch (low complexity) spans glutamate 76 to histidine 91. Composition is skewed to basic and acidic residues over residues tryptophan 92–arginine 115 and glutamine 159–glutamine 172. Positions glutamine 189 to glycine 211 are enriched in low complexity. Composition is skewed to basic and acidic residues over residues glutamine 212 to glycine 231, glutamine 252 to glutamate 264, and lysine 274 to glutamate 320. Residues glycine 321 to lysine 334 are compositionally biased toward low complexity. Basic and acidic residues-rich tracts occupy residues glutamine 335–leucine 353, glycine 404–glutamate 420, glutamine 454–alanine 463, lysine 476–glutamate 486, and glutamine 494–glutamine 510.

Belongs to the involucrin family. As to quaternary structure, directly or indirectly cross-linked to cornifelin (CNFN). Substrate of transglutaminase. Specific glutamines or lysines are cross-linked to keratins, desmoplakin and to inter involucrin molecules. Keratinocytes of epidermis and other stratified squamous epithelia.

Its subcellular location is the cytoplasm. In terms of biological role, part of the insoluble cornified cell envelope (CE) of stratified squamous epithelia. This chain is Involucrin (IVL), found in Pan paniscus (Pygmy chimpanzee).